Consider the following 329-residue polypeptide: Serine/threonine-protein phosphatase PP1-alpha (329 aa).

Asp64, His66, Asp92, and Asn124 together coordinate Mn(2+). His125 (proton donor) is an active-site residue. Positions 173 and 248 each coordinate Mn(2+). The interval 309–329 (GMNSGRPAVGGGRPGTTAGKK) is disordered.

This sequence belongs to the PPP phosphatase family. PP-1 subfamily. Interacts with lab-1; the interaction is direct. Interacts with knl-1; the interaction is direct. Mn(2+) serves as cofactor.

It carries out the reaction O-phospho-L-seryl-[protein] + H2O = L-seryl-[protein] + phosphate. The catalysed reaction is O-phospho-L-threonyl-[protein] + H2O = L-threonyl-[protein] + phosphate. Functionally, serine/threonine-protein phosphatase which antagonizes the function of air-2 in the regulation of chromosome cohesion. Dephosphorylates histone H3 at 'Ser-10'. Dephosphorylates translation initiation factor eIF2alpha. Involved in the activation of chloride channel clh-3 during cell swelling and meiotic maturation. In Caenorhabditis briggsae, this protein is Serine/threonine-protein phosphatase PP1-alpha (gsp-1).